Reading from the N-terminus, the 180-residue chain is ATP-dependent protease subunit HslV (180 aa).

T5 is an active-site residue. Positions 161, 164, and 167 each coordinate Na(+).

It belongs to the peptidase T1B family. HslV subfamily. As to quaternary structure, a double ring-shaped homohexamer of HslV is capped on each side by a ring-shaped HslU homohexamer. The assembly of the HslU/HslV complex is dependent on binding of ATP.

The protein localises to the cytoplasm. The catalysed reaction is ATP-dependent cleavage of peptide bonds with broad specificity.. With respect to regulation, allosterically activated by HslU binding. Its function is as follows. Protease subunit of a proteasome-like degradation complex believed to be a general protein degrading machinery. The sequence is that of ATP-dependent protease subunit HslV from Campylobacter fetus subsp. fetus (strain 82-40).